A 298-amino-acid chain; its full sequence is UDP-3-O-acyl-N-acetylglucosamine deacetylase (298 aa).

3 residues coordinate Zn(2+): His75, His232, and Asp236. Catalysis depends on His259, which acts as the Proton donor.

This sequence belongs to the LpxC family. Requires Zn(2+) as cofactor.

It catalyses the reaction a UDP-3-O-[(3R)-3-hydroxyacyl]-N-acetyl-alpha-D-glucosamine + H2O = a UDP-3-O-[(3R)-3-hydroxyacyl]-alpha-D-glucosamine + acetate. Its pathway is glycolipid biosynthesis; lipid IV(A) biosynthesis; lipid IV(A) from (3R)-3-hydroxytetradecanoyl-[acyl-carrier-protein] and UDP-N-acetyl-alpha-D-glucosamine: step 2/6. Its function is as follows. Catalyzes the hydrolysis of UDP-3-O-myristoyl-N-acetylglucosamine to form UDP-3-O-myristoylglucosamine and acetate, the committed step in lipid A biosynthesis. In Nitratiruptor sp. (strain SB155-2), this protein is UDP-3-O-acyl-N-acetylglucosamine deacetylase.